A 151-amino-acid chain; its full sequence is Putative phosphatidylglycerol/phosphatidylinositol transfer protein 3 (151 aa).

Residues 1–26 (MKYSQNQIVYVIFFFIILIVVKPIES) form the signal peptide.

The protein belongs to the NPC2 family. In terms of assembly, monomer.

In terms of biological role, catalyzes the intermembrane transfer of phosphatidylglycerol and phosphatidylinositol. The polypeptide is Putative phosphatidylglycerol/phosphatidylinositol transfer protein 3 (Dictyostelium discoideum (Social amoeba)).